The chain runs to 475 residues: Aspartyl/glutamyl-tRNA(Asn/Gln) amidotransferase subunit B (475 aa).

The protein belongs to the GatB/GatE family. GatB subfamily. As to quaternary structure, heterotrimer of A, B and C subunits.

It carries out the reaction L-glutamyl-tRNA(Gln) + L-glutamine + ATP + H2O = L-glutaminyl-tRNA(Gln) + L-glutamate + ADP + phosphate + H(+). It catalyses the reaction L-aspartyl-tRNA(Asn) + L-glutamine + ATP + H2O = L-asparaginyl-tRNA(Asn) + L-glutamate + ADP + phosphate + 2 H(+). Functionally, allows the formation of correctly charged Asn-tRNA(Asn) or Gln-tRNA(Gln) through the transamidation of misacylated Asp-tRNA(Asn) or Glu-tRNA(Gln) in organisms which lack either or both of asparaginyl-tRNA or glutaminyl-tRNA synthetases. The reaction takes place in the presence of glutamine and ATP through an activated phospho-Asp-tRNA(Asn) or phospho-Glu-tRNA(Gln). The polypeptide is Aspartyl/glutamyl-tRNA(Asn/Gln) amidotransferase subunit B (Trichlorobacter lovleyi (strain ATCC BAA-1151 / DSM 17278 / SZ) (Geobacter lovleyi)).